Reading from the N-terminus, the 284-residue chain is tRNA-cytidine(32) 2-sulfurtransferase (284 aa).

The short motif at S45 to S50 is the PP-loop motif element. The [4Fe-4S] cluster site is built by C120, C123, and C211.

Belongs to the TtcA family. As to quaternary structure, homodimer. It depends on Mg(2+) as a cofactor. Requires [4Fe-4S] cluster as cofactor.

It localises to the cytoplasm. The catalysed reaction is cytidine(32) in tRNA + S-sulfanyl-L-cysteinyl-[cysteine desulfurase] + AH2 + ATP = 2-thiocytidine(32) in tRNA + L-cysteinyl-[cysteine desulfurase] + A + AMP + diphosphate + H(+). It participates in tRNA modification. In terms of biological role, catalyzes the ATP-dependent 2-thiolation of cytidine in position 32 of tRNA, to form 2-thiocytidine (s(2)C32). The sulfur atoms are provided by the cysteine/cysteine desulfurase (IscS) system. The chain is tRNA-cytidine(32) 2-sulfurtransferase from Alcanivorax borkumensis (strain ATCC 700651 / DSM 11573 / NCIMB 13689 / SK2).